Here is a 64-residue protein sequence, read N- to C-terminus: Large ribosomal subunit protein bL33 (64 aa).

This sequence belongs to the bacterial ribosomal protein bL33 family.

The polypeptide is Large ribosomal subunit protein bL33 (Crocosphaera subtropica (strain ATCC 51142 / BH68) (Cyanothece sp. (strain ATCC 51142))).